A 245-amino-acid polypeptide reads, in one-letter code: MMRADLSKKPGQVSAMFDEVSSAYDRTNTLLSVGNDQLWRVATTRAVAPVAGERILDLAAGTGTSSAALAASGAHVVAADFSEGMLEVGRRRLAGDDRVEFVHADATDLPFDDDSFDAVTISFGLRNVVEPRKGLDELLRVLKPGGRIVICEFSTPPVPLVRRGYDLYMKAVAPSLVKLVSSNASAYEYLNESIQAWPDQETLSSWLRAAGFASVEHRNLTAGIVALHRGVKPAGRHAAPRPAAS.

S-adenosyl-L-methionine contacts are provided by residues Thr-62, Asp-80, 105 to 106 (DA), and Ser-122.

Belongs to the class I-like SAM-binding methyltransferase superfamily. MenG/UbiE family.

The enzyme catalyses a 2-demethylmenaquinol + S-adenosyl-L-methionine = a menaquinol + S-adenosyl-L-homocysteine + H(+). It participates in quinol/quinone metabolism; menaquinone biosynthesis; menaquinol from 1,4-dihydroxy-2-naphthoate: step 2/2. Its function is as follows. Methyltransferase required for the conversion of demethylmenaquinol (DMKH2) to menaquinol (MKH2). In Clavibacter sepedonicus (Clavibacter michiganensis subsp. sepedonicus), this protein is Demethylmenaquinone methyltransferase.